The primary structure comprises 193 residues: MAVSPDDPLILVGRVAGGFGVRGEVRITTYTEDPLSIAGFKALKRQDGSPALTIASARKTKDGVVCRCPGVETKEAADALRGLRLYVPRSALPEPDDDEFYLTDLVGLTVRHIQTDQLLGRVKSVQNFGAGDILEITPDLGGPTWYLPFTRAAVPEVRVSEGLILADPPALVGDHEGPEEKGLDENEELGDRD.

The 76-residue stretch at 97–172 folds into the PRC barrel domain; the sequence is DDEFYLTDLV…LILADPPALV (76 aa). Positions 168–193 are disordered; sequence PPALVGDHEGPEEKGLDENEELGDRD. Residues 173-193 are compositionally biased toward basic and acidic residues; it reads GDHEGPEEKGLDENEELGDRD.

The protein belongs to the RimM family. Binds ribosomal protein uS19.

The protein resides in the cytoplasm. An accessory protein needed during the final step in the assembly of 30S ribosomal subunit, possibly for assembly of the head region. Essential for efficient processing of 16S rRNA. May be needed both before and after RbfA during the maturation of 16S rRNA. It has affinity for free ribosomal 30S subunits but not for 70S ribosomes. The polypeptide is Ribosome maturation factor RimM (Caulobacter vibrioides (strain ATCC 19089 / CIP 103742 / CB 15) (Caulobacter crescentus)).